A 344-amino-acid polypeptide reads, in one-letter code: Arginine N-succinyltransferase (344 aa).

Residue leucine 125 participates in succinyl-CoA binding. Histidine 229 functions as the Proton donor in the catalytic mechanism.

The protein belongs to the arginine N-succinyltransferase family.

The enzyme catalyses succinyl-CoA + L-arginine = N(2)-succinyl-L-arginine + CoA + H(+). Its pathway is amino-acid degradation; L-arginine degradation via AST pathway; L-glutamate and succinate from L-arginine: step 1/5. Its function is as follows. Catalyzes the transfer of succinyl-CoA to arginine to produce N(2)-succinylarginine. The chain is Arginine N-succinyltransferase from Shigella boydii serotype 4 (strain Sb227).